The primary structure comprises 449 residues: Metacaspase-1 (449 aa).

Residues 1 to 132 are disordered; that stretch reads MFPGQGRHTY…YSRPPTNQQS (132 aa). The span at 10–26 shows a compositional bias: low complexity; it reads YGGQQQLLQLQQYNYGP. A compositionally biased stretch (pro residues) spans 27 to 55; the sequence is PQGPPPNGYGPPPGPPPNGYGPPPGPPPQ. The span at 56 to 66 shows a compositional bias: polar residues; it reads NSWGYGNPSGT. Low complexity-rich tracts occupy residues 67–91 and 98–112; these read QSSN…YQRP and QSGN…NGEP. Residues 119 to 132 are compositionally biased toward polar residues; the sequence is GSGQYSRPPTNQQS. Residues His-232 and Cys-293 contribute to the active site.

It belongs to the peptidase C14B family.

Functionally, involved in cell death (apoptosis). This chain is Metacaspase-1 (MCA1), found in Lodderomyces elongisporus (strain ATCC 11503 / CBS 2605 / JCM 1781 / NBRC 1676 / NRRL YB-4239) (Yeast).